Reading from the N-terminus, the 553-residue chain is Major facilitator-type transporter hxnZ (553 aa).

Transmembrane regions (helical) follow at residues 89 to 109, 128 to 148, 152 to 172, 174 to 194, and 213 to 233; these read FTVAGFGWIVDNFCSQGISAV, VAYYVGMIIGASFWGISSDLI, PAFNSTLAIAGIFLCAAAGTS, FIAFSALWAVIGTAAGGNVVC, and ALSGWWNLGQLVVSLLAWVFL. Asparagine 235 is a glycosylation site (N-linked (GlcNAc...) asparagine). A run of 7 helical transmembrane segments spans residues 257–277, 366–386, 409–429, 433–453, 459–481, 496–516, and 525–545; these read YTLITLGGLSLAFTFVRIFVF, ALIWAVWLIIGIAYPLYFNFL, IQSAVGVVGPLSAAVLVNTFL, WMMGISSIVTGVFLFAYVGVK, LAFSCVTGLLANFANQLSEYAIM, TASGTAASLLRFGGLVASLIA, and PIYASAALWVGVGVLCFGLPF.

The protein belongs to the major facilitator superfamily.

The protein resides in the cell membrane. Major facilitator-type transporter, part of the hnx cluster involved in the purine degradation. The nicotinate hydroxylase hnxS accepts nicotinate as a substrate and catalyzes the first step of nicotinate catabolism. The major facilitator-type transporters hxnP and hxnZ are probably involved in the uptake of nicotinate-derived metabolites, and the oxidoreductases hxnT and hxnY in the further metabolism of 6-OH nicotinic acid. The protein is Major facilitator-type transporter hxnZ of Emericella nidulans (strain FGSC A4 / ATCC 38163 / CBS 112.46 / NRRL 194 / M139) (Aspergillus nidulans).